Consider the following 1367-residue polypeptide: Insulin-like growth factor 1 receptor (1367 aa).

An N-terminal signal peptide occupies residues 1–30; the sequence is MKSGSGGGSPTSLWGLLFLSAALSLWPTSG. Cysteines 33 and 52 form a disulfide. N-linked (GlcNAc...) asparagine glycosylation is found at Asn51, Asn102, and Asn135. Cystine bridges form between Cys150/Cys178, Cys182/Cys205, Cys192/Cys211, Cys215/Cys224, Cys219/Cys230, Cys231/Cys239, Cys235/Cys248, Cys251/Cys260, Cys264/Cys276, Cys282/Cys303, Cys307/Cys321, Cys324/Cys328, and Cys332/Cys353. Asn244 carries an N-linked (GlcNAc...) asparagine glycan. Residue Asn314 is glycosylated (N-linked (GlcNAc...) asparagine). N-linked (GlcNAc...) asparagine glycosylation is found at Asn417 and Asn438. An intrachain disulfide couples Cys455 to Cys488. 4 consecutive Fibronectin type-III domains span residues 491–609, 610–708, 735–828, and 834–927; these read DVLH…TNAS, VPSI…TEAE, PERK…TMPA, and IPGP…VQAK. N-linked (GlcNAc...) asparagine glycosylation is found at Asn534, Asn607, Asn622, Asn640, Asn747, Asn756, Asn764, Asn900, and Asn913. Over 741–935 the chain is Extracellular; it reads DVMQVANTTM…AKTGYENFIH (195 aa). Residues 936–959 form a helical membrane-spanning segment; that stretch reads LIIALPVAVLLIVGGLVIMLYVFH. At 960–1367 the chain is on the cytoplasmic side; sequence RKRNNSRLGN…ALPLPQSSTC (408 aa). Residues 977–980 carry the IRS1- and SHC1-binding motif; sequence NPEY. At Tyr980 the chain carries Phosphotyrosine. Residues 999 to 1274 enclose the Protein kinase domain; that stretch reads ITMSRELGQG…SIKEEMEPGF (276 aa). Residues 1005-1013 and Lys1033 contribute to the ATP site; that span reads LGQGSFGMV. Residue Asp1135 is the Proton acceptor of the active site. A phosphotyrosine; by autocatalysis mark is found at Tyr1161, Tyr1165, and Tyr1166. Glycyl lysine isopeptide (Lys-Gly) (interchain with G-Cter in ubiquitin) cross-links involve residues Lys1168 and Lys1171. Ser1278 is subject to Phosphoserine; by GSK3-beta. At Ser1282 the chain carries Phosphoserine. The tract at residues 1288–1367 is disordered; that stretch reads PEPEELDLEP…ALPLPQSSTC (80 aa). The segment covering 1290-1299 has biased composition (acidic residues); the sequence is PEELDLEPEN. Low complexity predominate over residues 1300 to 1316; that stretch reads MESVPLDPSASSSSLPL. Over residues 1317-1326 the composition is skewed to basic and acidic residues; the sequence is PDRHSGHKAE.

This sequence belongs to the protein kinase superfamily. Tyr protein kinase family. Insulin receptor subfamily. In terms of assembly, tetramer of 2 alpha and 2 beta chains linked by disulfide bonds. The alpha chains contribute to the formation of the ligand-binding domain, while the beta chain carries the kinase domain. Interacts with PIK3R1 and with the PTB/PID domains of IRS1 and SHC1 in vitro when autophosphorylated on tyrosine residues. Forms a hybrid receptor with INSR, the hybrid is a tetramer consisting of 1 alpha chain and 1 beta chain of INSR and 1 alpha chain and 1 beta chain of IGF1R. Interacts with ARRB1 and ARRB2. Interacts with GRB10. Interacts with RACK1. Interacts with SOCS1, SOCS2 and SOCS3. Interacts with 14-3-3 proteins. Interacts with NMD2. Interacts with MAP3K5. Interacts with STAT3. Found in a ternary complex with IGF1 and ITGAV:ITGB3 or ITGA6:ITGB4. Interacts (nascent precursor form) with ZFAND2B. (Microbial infection) Interacts with human respiratory syncytial virus (HRSV) fusion glycoprotein F1/F2 heterodimer. Autophosphorylated on tyrosine residues in response to ligand binding. Autophosphorylation occurs in trans, i.e. one subunit of the dimeric receptor phosphorylates tyrosine residues on the other subunit. Autophosphorylation occurs in a sequential manner; Tyr-1165 is predominantly phosphorylated first, followed by phosphorylation of Tyr-1161 and Tyr-1166. While every single phosphorylation increases kinase activity, all three tyrosine residues in the kinase activation loop (Tyr-1165, Tyr-1161 and Tyr-1166) have to be phosphorylated for optimal activity. Can be autophosphorylated at additional tyrosine residues (in vitro). Autophosphorylated is followed by phosphorylation of juxtamembrane tyrosines and C-terminal serines. May also be phosphorylated at Tyr-1161 and Tyr-1166 by mTORC2. Phosphorylation of Tyr-980 is required for IRS1- and SHC1-binding. Phosphorylation of Ser-1278 by GSK-3beta restrains kinase activity and promotes cell surface expression, it requires a priming phosphorylation at Ser-1282. Dephosphorylated by PTPN1. In terms of processing, polyubiquitinated at Lys-1168 and Lys-1171 through both 'Lys-48' and 'Lys-29' linkages, promoting receptor endocytosis and subsequent degradation by the proteasome. Ubiquitination is facilitated by pre-existing phosphorylation. Post-translationally, sumoylated with SUMO1. Controlled by regulated intramembrane proteolysis (RIP). Undergoes metalloprotease-dependent constitutive ectodomain shedding to produce a membrane-anchored 52 kDa C-Terminal fragment which is further processed by presenilin gamma-secretase to yield an intracellular 50 kDa fragment. In terms of tissue distribution, found as a hybrid receptor with INSR in muscle, heart, kidney, adipose tissue, skeletal muscle, hepatoma, fibroblasts, spleen and placenta (at protein level). Expressed in a variety of tissues. Overexpressed in tumors, including melanomas, cancers of the colon, pancreas prostate and kidney.

The protein localises to the cell membrane. The catalysed reaction is L-tyrosyl-[protein] + ATP = O-phospho-L-tyrosyl-[protein] + ADP + H(+). With respect to regulation, activated by autophosphorylation at Tyr-1165, Tyr-1161 and Tyr-1166 on the kinase activation loop; phosphorylation at all three tyrosine residues is required for optimal kinase activity. Inhibited by MSC1609119A-1, BMS-754807, PQIP, benzimidazole pyridinone, isoquinolinedione, bis-azaindole, 3-cyanoquinoline, 2,4-bis-arylamino-1,3-pyrimidine, pyrrolopyrimidine, pyrrole-5-carboxaldehyde, picropodophyllin (PPP), tyrphostin derivatives. While most inhibitors bind to the ATP binding pocket, MSC1609119A-1 functions as allosteric inhibitor and binds close to the DFG motif and the activation loop. Functionally, receptor tyrosine kinase which mediates actions of insulin-like growth factor 1 (IGF1). Binds IGF1 with high affinity and IGF2 and insulin (INS) with a lower affinity. The activated IGF1R is involved in cell growth and survival control. IGF1R is crucial for tumor transformation and survival of malignant cell. Ligand binding activates the receptor kinase, leading to receptor autophosphorylation, and tyrosines phosphorylation of multiple substrates, that function as signaling adapter proteins including, the insulin-receptor substrates (IRS1/2), Shc and 14-3-3 proteins. Phosphorylation of IRSs proteins lead to the activation of two main signaling pathways: the PI3K-AKT/PKB pathway and the Ras-MAPK pathway. The result of activating the MAPK pathway is increased cellular proliferation, whereas activating the PI3K pathway inhibits apoptosis and stimulates protein synthesis. Phosphorylated IRS1 can activate the 85 kDa regulatory subunit of PI3K (PIK3R1), leading to activation of several downstream substrates, including protein AKT/PKB. AKT phosphorylation, in turn, enhances protein synthesis through mTOR activation and triggers the antiapoptotic effects of IGFIR through phosphorylation and inactivation of BAD. In parallel to PI3K-driven signaling, recruitment of Grb2/SOS by phosphorylated IRS1 or Shc leads to recruitment of Ras and activation of the ras-MAPK pathway. In addition to these two main signaling pathways IGF1R signals also through the Janus kinase/signal transducer and activator of transcription pathway (JAK/STAT). Phosphorylation of JAK proteins can lead to phosphorylation/activation of signal transducers and activators of transcription (STAT) proteins. In particular activation of STAT3, may be essential for the transforming activity of IGF1R. The JAK/STAT pathway activates gene transcription and may be responsible for the transforming activity. JNK kinases can also be activated by the IGF1R. IGF1 exerts inhibiting activities on JNK activation via phosphorylation and inhibition of MAP3K5/ASK1, which is able to directly associate with the IGF1R. Its function is as follows. When present in a hybrid receptor with INSR, binds IGF1. PubMed:12138094 shows that hybrid receptors composed of IGF1R and INSR isoform Long are activated with a high affinity by IGF1, with low affinity by IGF2 and not significantly activated by insulin, and that hybrid receptors composed of IGF1R and INSR isoform Short are activated by IGF1, IGF2 and insulin. In contrast, PubMed:16831875 shows that hybrid receptors composed of IGF1R and INSR isoform Long and hybrid receptors composed of IGF1R and INSR isoform Short have similar binding characteristics, both bind IGF1 and have a low affinity for insulin. This is Insulin-like growth factor 1 receptor (IGF1R) from Homo sapiens (Human).